The sequence spans 417 residues: Serine hydroxymethyltransferase (417 aa).

(6S)-5,6,7,8-tetrahydrofolate is bound by residues Leu-121 and 125–127 (GHL). Lys-229 carries the N6-(pyridoxal phosphate)lysine modification. 354–356 (SPF) lines the (6S)-5,6,7,8-tetrahydrofolate pocket.

The protein belongs to the SHMT family. As to quaternary structure, homodimer. Pyridoxal 5'-phosphate serves as cofactor.

It localises to the cytoplasm. It carries out the reaction (6R)-5,10-methylene-5,6,7,8-tetrahydrofolate + glycine + H2O = (6S)-5,6,7,8-tetrahydrofolate + L-serine. It participates in one-carbon metabolism; tetrahydrofolate interconversion. It functions in the pathway amino-acid biosynthesis; glycine biosynthesis; glycine from L-serine: step 1/1. Functionally, catalyzes the reversible interconversion of serine and glycine with tetrahydrofolate (THF) serving as the one-carbon carrier. This reaction serves as the major source of one-carbon groups required for the biosynthesis of purines, thymidylate, methionine, and other important biomolecules. Also exhibits THF-independent aldolase activity toward beta-hydroxyamino acids, producing glycine and aldehydes, via a retro-aldol mechanism. The protein is Serine hydroxymethyltransferase of Stutzerimonas stutzeri (strain A1501) (Pseudomonas stutzeri).